Here is a 168-residue protein sequence, read N- to C-terminus: 2-C-methyl-D-erythritol 2,4-cyclodiphosphate synthase (168 aa).

A divalent metal cation-binding residues include Asp15 and His17. Residues 15 to 17 and 45 to 46 each bind 4-CDP-2-C-methyl-D-erythritol 2-phosphate; these read DVH and HS. His53 serves as a coordination point for a divalent metal cation. 4-CDP-2-C-methyl-D-erythritol 2-phosphate-binding positions include 72–76, Phe150, and Arg153; that span reads FPNSD.

Belongs to the IspF family. Homotrimer. A divalent metal cation is required as a cofactor.

It carries out the reaction 4-CDP-2-C-methyl-D-erythritol 2-phosphate = 2-C-methyl-D-erythritol 2,4-cyclic diphosphate + CMP. Its pathway is isoprenoid biosynthesis; isopentenyl diphosphate biosynthesis via DXP pathway; isopentenyl diphosphate from 1-deoxy-D-xylulose 5-phosphate: step 4/6. Its function is as follows. Involved in the biosynthesis of isopentenyl diphosphate (IPP) and dimethylallyl diphosphate (DMAPP), two major building blocks of isoprenoid compounds. Catalyzes the conversion of 4-diphosphocytidyl-2-C-methyl-D-erythritol 2-phosphate (CDP-ME2P) to 2-C-methyl-D-erythritol 2,4-cyclodiphosphate (ME-CPP) with a corresponding release of cytidine 5-monophosphate (CMP). The sequence is that of 2-C-methyl-D-erythritol 2,4-cyclodiphosphate synthase from Anaplasma phagocytophilum (strain HZ).